A 1179-amino-acid chain; its full sequence is DNA-directed RNA polymerase subunit beta' (1179 aa).

Residues cysteine 60, cysteine 62, cysteine 75, and cysteine 78 each coordinate Zn(2+). The Mg(2+) site is built by aspartate 450, aspartate 452, and aspartate 454. The Zn(2+) site is built by cysteine 791, cysteine 865, cysteine 872, and cysteine 875.

The protein belongs to the RNA polymerase beta' chain family. In terms of assembly, the RNAP catalytic core consists of 2 alpha, 1 beta, 1 beta' and 1 omega subunit. When a sigma factor is associated with the core the holoenzyme is formed, which can initiate transcription. Requires Mg(2+) as cofactor. The cofactor is Zn(2+).

The catalysed reaction is RNA(n) + a ribonucleoside 5'-triphosphate = RNA(n+1) + diphosphate. In terms of biological role, DNA-dependent RNA polymerase catalyzes the transcription of DNA into RNA using the four ribonucleoside triphosphates as substrates. In Alkaliphilus oremlandii (strain OhILAs) (Clostridium oremlandii (strain OhILAs)), this protein is DNA-directed RNA polymerase subunit beta'.